The following is an 83-amino-acid chain: Large ribosomal subunit protein bL27 (83 aa).

This sequence belongs to the bacterial ribosomal protein bL27 family.

The sequence is that of Large ribosomal subunit protein bL27 from Treponema denticola (strain ATCC 35405 / DSM 14222 / CIP 103919 / JCM 8153 / KCTC 15104).